We begin with the raw amino-acid sequence, 529 residues long: Peptide chain release factor 3 (529 aa).

Residues 11–280 (AKRRTFAIIS…GLVKWAPAPM (270 aa)) enclose the tr-type G domain. Residues 20–27 (SHPDAGKT), 88–92 (DTPGH), and 142–145 (NKLD) contribute to the GTP site.

Belongs to the TRAFAC class translation factor GTPase superfamily. Classic translation factor GTPase family. PrfC subfamily.

It is found in the cytoplasm. Its function is as follows. Increases the formation of ribosomal termination complexes and stimulates activities of RF-1 and RF-2. It binds guanine nucleotides and has strong preference for UGA stop codons. It may interact directly with the ribosome. The stimulation of RF-1 and RF-2 is significantly reduced by GTP and GDP, but not by GMP. The protein is Peptide chain release factor 3 of Photorhabdus laumondii subsp. laumondii (strain DSM 15139 / CIP 105565 / TT01) (Photorhabdus luminescens subsp. laumondii).